The chain runs to 585 residues: Arginine--tRNA ligase (585 aa).

Positions 126–136 (PNIAKEMHVGH) match the 'HIGH' region motif.

This sequence belongs to the class-I aminoacyl-tRNA synthetase family. Monomer.

It localises to the cytoplasm. The enzyme catalyses tRNA(Arg) + L-arginine + ATP = L-arginyl-tRNA(Arg) + AMP + diphosphate. This chain is Arginine--tRNA ligase, found in Cyanothece sp. (strain PCC 7425 / ATCC 29141).